The primary structure comprises 202 residues: MTLWLGPQPLVLASQSRARQTVLANAGIPFDAIPADIDERGIAEASGLSAPGDIAALLAQQKAAFVSNYHPGRLVLGADQTLALGARGFNKPADRAAAAKQLRELAGRRHELHSAVAVVRNGITLFADVAIARMTMRPLTEAEIEAYLDVVGDKATTSVGAYQIEGLGVHLFDGIHGDHFTILGLPLLPLLGFLRSQNLLAV.

Aspartate 79 acts as the Proton acceptor in catalysis.

It belongs to the Maf family. A divalent metal cation serves as cofactor.

It localises to the cytoplasm. It catalyses the reaction a ribonucleoside 5'-triphosphate + H2O = a ribonucleoside 5'-phosphate + diphosphate + H(+). The enzyme catalyses a 2'-deoxyribonucleoside 5'-triphosphate + H2O = a 2'-deoxyribonucleoside 5'-phosphate + diphosphate + H(+). Its function is as follows. Nucleoside triphosphate pyrophosphatase. May have a dual role in cell division arrest and in preventing the incorporation of modified nucleotides into cellular nucleic acids. The protein is Nucleoside triphosphate pyrophosphatase of Rhodopseudomonas palustris (strain ATCC BAA-98 / CGA009).